The sequence spans 72 residues: Protein kish-A (72 aa).

An N-terminal signal peptide occupies residues Met1–Ser26. The Extracellular portion of the chain corresponds to Leu27–Lys53. Asn35 is a glycosylation site (N-linked (GlcNAc...) asparagine). A helical membrane pass occupies residues Ser54 to Ser71. Glu72 is a topological domain (cytoplasmic).

This sequence belongs to the KISH family.

It localises to the golgi apparatus membrane. Involved in the early part of the secretory pathway. In Danio rerio (Zebrafish), this protein is Protein kish-A (tmem167a).